Consider the following 202-residue polypeptide: 3-isopropylmalate dehydratase small subunit (202 aa).

Belongs to the LeuD family. LeuD type 1 subfamily. Heterodimer of LeuC and LeuD.

The catalysed reaction is (2R,3S)-3-isopropylmalate = (2S)-2-isopropylmalate. It functions in the pathway amino-acid biosynthesis; L-leucine biosynthesis; L-leucine from 3-methyl-2-oxobutanoate: step 2/4. Catalyzes the isomerization between 2-isopropylmalate and 3-isopropylmalate, via the formation of 2-isopropylmaleate. This chain is 3-isopropylmalate dehydratase small subunit, found in Nocardioides sp. (strain ATCC BAA-499 / JS614).